We begin with the raw amino-acid sequence, 338 residues long: NADPH dehydrogenase (338 aa).

23–26 (SPMC) contributes to the FMN binding site. Substrate is bound at residue Tyr28. FMN is bound by residues Ala60 and Gln102. 163-166 (HGAH) is a substrate binding site. FMN-binding positions include Arg214 and 306-307 (AR).

The protein belongs to the NADH:flavin oxidoreductase/NADH oxidase family. NamA subfamily. Homotetramer. It depends on FMN as a cofactor.

It carries out the reaction A + NADPH + H(+) = AH2 + NADP(+). Functionally, catalyzes the reduction of the double bond of an array of alpha,beta-unsaturated aldehydes and ketones. It also reduces the nitro group of nitroester and nitroaromatic compounds. It could have a role in detoxification processes. This is NADPH dehydrogenase from Halalkalibacterium halodurans (strain ATCC BAA-125 / DSM 18197 / FERM 7344 / JCM 9153 / C-125) (Bacillus halodurans).